Here is a 392-residue protein sequence, read N- to C-terminus: Anhydro-N-acetylmuramic acid kinase (392 aa).

An ATP-binding site is contributed by 19–26; that stretch reads GTSVDGID.

It belongs to the anhydro-N-acetylmuramic acid kinase family.

The enzyme catalyses 1,6-anhydro-N-acetyl-beta-muramate + ATP + H2O = N-acetyl-D-muramate 6-phosphate + ADP + H(+). It functions in the pathway amino-sugar metabolism; 1,6-anhydro-N-acetylmuramate degradation. The protein operates within cell wall biogenesis; peptidoglycan recycling. In terms of biological role, catalyzes the specific phosphorylation of 1,6-anhydro-N-acetylmuramic acid (anhMurNAc) with the simultaneous cleavage of the 1,6-anhydro ring, generating MurNAc-6-P. Is required for the utilization of anhMurNAc either imported from the medium or derived from its own cell wall murein, and thus plays a role in cell wall recycling. This Trichormus variabilis (strain ATCC 29413 / PCC 7937) (Anabaena variabilis) protein is Anhydro-N-acetylmuramic acid kinase.